Reading from the N-terminus, the 250-residue chain is Leucyl/phenylalanyl-tRNA--protein transferase (250 aa).

The protein belongs to the L/F-transferase family.

It localises to the cytoplasm. The catalysed reaction is N-terminal L-lysyl-[protein] + L-leucyl-tRNA(Leu) = N-terminal L-leucyl-L-lysyl-[protein] + tRNA(Leu) + H(+). The enzyme catalyses N-terminal L-arginyl-[protein] + L-leucyl-tRNA(Leu) = N-terminal L-leucyl-L-arginyl-[protein] + tRNA(Leu) + H(+). It carries out the reaction L-phenylalanyl-tRNA(Phe) + an N-terminal L-alpha-aminoacyl-[protein] = an N-terminal L-phenylalanyl-L-alpha-aminoacyl-[protein] + tRNA(Phe). In terms of biological role, functions in the N-end rule pathway of protein degradation where it conjugates Leu, Phe and, less efficiently, Met from aminoacyl-tRNAs to the N-termini of proteins containing an N-terminal arginine or lysine. This Xanthomonas oryzae pv. oryzae (strain MAFF 311018) protein is Leucyl/phenylalanyl-tRNA--protein transferase.